A 654-amino-acid chain; its full sequence is Neuroendocrine convertase 2 (654 aa).

An N-terminal signal peptide occupies residues 1–21 (MAAATWSWLLAPFLLLHWASA). The propeptide occupies 22–121 (GAGGGAGGSG…VQQPGFKRVK (100 aa)). The Peptidase S8 domain maps to 158–483 (QWYLKNTGQN…FGVLDAGAMV (326 aa)). Asn-189 carries an N-linked (GlcNAc...) asparagine glycan. Active-site charge relay system residues include Asp-196 and His-237. 2 disulfide bridges follow: Cys-254-Cys-404 and Cys-346-Cys-376. A glycan (N-linked (GlcNAc...) asparagine) is linked at Asn-312. The Charge relay system role is filled by Ser-412. Residues 491–627 (SVPPRYHCEA…SLVLHGTKEA (137 aa)) enclose the P/Homo B domain. Cys-498 and Cys-524 are disulfide-bonded. The N-linked (GlcNAc...) asparagine glycan is linked to Asn-544.

Belongs to the peptidase S8 family. Furin subfamily. As to expression, expressed in the central nervous system (CNS) and midgut endocrine cells of third instar larva (at protein level). In the CNS, expressed in the CA-LP1 and CA-LP2 neurons which innervate the corpus allatum, and in the CC-MS2 neurons which innervate the corpora cardiaca of the ring gland. Also expressed in the CC-MS1, SP3, Tv and Va neurons. Expressed in Akh-producing cells of the corpora cardiaca. In the embryo, restricted to the final stages of embryogenesis where expression is found in anterior sensory structures and in only 168 cells in the brain and ventral nerve cord. After larvae hatch, the sensory structures and most cells in the CNS turn off or substantially reduce expression. In third instar larva, expressed at higher levels in the anterior section than in the posterior section. Little expression is detected in the adult head. In the developing eye, expressed at higher levels in pale-type R7 photoreceptor cells than in yellow-type R7 cells although expression is not seen in all pale-type R7 cells. Also expressed in outer photoreceptor cells.

It is found in the secreted. It carries out the reaction Release of protein hormones and neuropeptides from their precursors, generally by hydrolysis of -Lys-Arg-|- bonds.. Its function is as follows. Serine endopeptidase which is involved in the processing of hormone and other protein precursors at sites comprised of pairs of basic amino acid residues. Required during embryonic and larval development, probably by proteolytically processing peptide hormones involved in hatching, larval growth and larval molting. Required for the processing and activation of Akh which maintains normal hemolymph sugar levels. Has been shown in one study to be required for processing of sli into slit N-product and slit C-product in the embryo which is necessary for lateral transverse muscle elongation but has been shown in another study not to be required for sli cleavage. Required for larval hatching. Also required for normal larval wandering behavior which occurs prior to pupariation. Required during pupal development for head eversion, leg and wing disk extension, and abdominal differentiation. Required during eye development for R8 photoreceptor cell specification by regulating processing of ligands required for the BMP and activin signaling pathways. The polypeptide is Neuroendocrine convertase 2 (Drosophila melanogaster (Fruit fly)).